The primary structure comprises 181 residues: ADP-ribosylation factor 1 (181 aa).

Residue Gly-2 is the site of N-myristoyl glycine attachment. GTP-binding positions include 24–31, 126–129, and Ala-160; these read GLDAAGKT and NKQD.

It belongs to the small GTPase superfamily. Arf family. As to quaternary structure, may interact with GTPase RAB5b.

It localises to the golgi apparatus membrane. The catalysed reaction is GTP + H2O = GDP + phosphate + H(+). With respect to regulation, alternates between an inactive GDP-bound form and an active GTP-bound form. Intrinsic GTPase activity is almost undetectable in vitro. Activated by a guanine nucleotide-exchange factor (GEF) and inactivated by GTPase-activating protein ARFGAP1. Its function is as follows. Small GTPase involved in protein trafficking between different compartments. Modulates vesicle budding and uncoating within the Golgi complex. In its GTP-bound form, triggers the recruitment of coatomer proteins to the Golgi membrane. The hydrolysis of ARF1-bound GTP, which is mediated by ARFGAPs proteins, is required for dissociation of coat proteins from Golgi membranes and vesicles. Regulates the transport of N-acylated AK2 to the parasitophorous vacuole membrane. May be involved in the activation of lipid kinase PIP5K. In Plasmodium falciparum (isolate NF54), this protein is ADP-ribosylation factor 1 (ARF1).